We begin with the raw amino-acid sequence, 180 residues long: Large ribosomal subunit protein uL5 (180 aa).

The protein belongs to the universal ribosomal protein uL5 family. In terms of assembly, part of the 50S ribosomal subunit; part of the 5S rRNA/L5/L18/L25 subcomplex. Contacts the 5S rRNA and the P site tRNA. Forms a bridge to the 30S subunit in the 70S ribosome.

In terms of biological role, this is one of the proteins that bind and probably mediate the attachment of the 5S RNA into the large ribosomal subunit, where it forms part of the central protuberance. In the 70S ribosome it contacts protein S13 of the 30S subunit (bridge B1b), connecting the 2 subunits; this bridge is implicated in subunit movement. Contacts the P site tRNA; the 5S rRNA and some of its associated proteins might help stabilize positioning of ribosome-bound tRNAs. This chain is Large ribosomal subunit protein uL5, found in Chlamydia felis (strain Fe/C-56) (Chlamydophila felis).